The chain runs to 621 residues: Glutathione-regulated potassium-efflux system protein KefC (621 aa).

12 consecutive transmembrane segments (helical) span residues 4-24, 26-46, 54-74, 90-110, 114-134, 151-171, 178-198, 218-238, 270-290, 294-314, 327-347, and 359-379; these read HTLI…PVAV, LGLG…PWGF, SILH…GLEL, GALQ…LLGM, VAEL…MQAM, VLLF…LLAV, LGAF…VILL, VFSA…EEAG, GLLL…GTLV, LRIL…LWLI, WFAV…GAAQ, and ALTL…VLLT. One can recognise an RCK N-terminal domain in the interval 399-518; it reads QPRVIIAGFG…AGVETPERET (120 aa). Positions 591–621 are disordered; the sequence is LSLTQRHGWQGTEEGKHTGDPRDEPESKPTV. Basic and acidic residues predominate over residues 603 to 621; the sequence is EEGKHTGDPRDEPESKPTV.

The protein belongs to the monovalent cation:proton antiporter 2 (CPA2) transporter (TC 2.A.37) family. KefC subfamily. As to quaternary structure, homodimer. Interacts with the regulatory subunit KefF.

It localises to the cell inner membrane. Pore-forming subunit of a potassium efflux system that confers protection against electrophiles. Catalyzes K(+)/H(+) antiport. The sequence is that of Glutathione-regulated potassium-efflux system protein KefC from Enterobacter sp. (strain 638).